The chain runs to 639 residues: Pheromone B alpha 1 receptor (639 aa).

7 helical membrane passes run 8 to 28 (LFPIFAFLGFVLAILPLPWHL), 37 to 57 (FFMMWTALGCLNQFINSVAWA), 70 to 90 (ISIRILMGASVGIPASSLCII), 113 to 133 (ILVDALICVLFPLVYIALQYI), 163 to 183 (VWPVLLGLISATYGVMALLQF), 209 to 229 (MALALTEMMCTMPLGIFVIVL), and 272 to 292 (LTRWCAPVSAFIFFFYFGFAE). Disordered regions lie at residues 375–416 (PRPM…SSPI), 490–516 (TVPHHSTADEPASPALPDTPSSCSSSA), 532–563 (SADVTRRDSGSSAGGVASTSRPTRAGPPRLPS), and 611–639 (TTAGAPATTTPDRGEPDVPTSPRTHRASV). Residues 383–398 (SSSGFSSSDSTRFGSS) are compositionally biased toward low complexity. 2 stretches are compositionally biased toward low complexity: residues 541–551 (GSSAGGVASTS) and 611–621 (TTAGAPATTTP).

It belongs to the G-protein coupled receptor 4 family.

The protein resides in the membrane. In terms of biological role, receptor for the BAP1 pheromone, a prenylated mating factor. Has a role in the initiation of B-regulated nuclear migration. In Schizophyllum commune (Split gill fungus), this protein is Pheromone B alpha 1 receptor (BAR1).